Reading from the N-terminus, the 396-residue chain is Chalcone synthase B (396 aa).

C170 is a catalytic residue.

This sequence belongs to the thiolase-like superfamily. Chalcone/stilbene synthases family.

The enzyme catalyses (E)-4-coumaroyl-CoA + 3 malonyl-CoA + 3 H(+) = 2',4,4',6'-tetrahydroxychalcone + 3 CO2 + 4 CoA. It functions in the pathway secondary metabolite biosynthesis; flavonoid biosynthesis. In terms of biological role, the primary product of this enzyme is 4,2',4',6'-tetrahydroxychalcone (also termed naringenin-chalcone or chalcone) which can under specific conditions spontaneously isomerize into naringenin. The protein is Chalcone synthase B (CHSB) of Ipomoea purpurea (Common morning glory).